The primary structure comprises 93 residues: Cell division topological specificity factor (93 aa).

This sequence belongs to the MinE family.

Its function is as follows. Prevents the cell division inhibition by proteins MinC and MinD at internal division sites while permitting inhibition at polar sites. This ensures cell division at the proper site by restricting the formation of a division septum at the midpoint of the long axis of the cell. In Agathobacter rectalis (strain ATCC 33656 / DSM 3377 / JCM 17463 / KCTC 5835 / VPI 0990) (Eubacterium rectale), this protein is Cell division topological specificity factor.